The following is a 171-amino-acid chain: 3-hydroxydecanoyl-[acyl-carrier-protein] dehydratase (171 aa).

His69 is a catalytic residue.

The protein belongs to the thioester dehydratase family. FabA subfamily. In terms of assembly, homodimer.

It is found in the cytoplasm. The enzyme catalyses a (3R)-hydroxyacyl-[ACP] = a (2E)-enoyl-[ACP] + H2O. It carries out the reaction (3R)-hydroxydecanoyl-[ACP] = (2E)-decenoyl-[ACP] + H2O. The catalysed reaction is (2E)-decenoyl-[ACP] = (3Z)-decenoyl-[ACP]. It participates in lipid metabolism; fatty acid biosynthesis. Functionally, necessary for the introduction of cis unsaturation into fatty acids. Catalyzes the dehydration of (3R)-3-hydroxydecanoyl-ACP to E-(2)-decenoyl-ACP and then its isomerization to Z-(3)-decenoyl-ACP. Can catalyze the dehydratase reaction for beta-hydroxyacyl-ACPs with saturated chain lengths up to 16:0, being most active on intermediate chain length. This is 3-hydroxydecanoyl-[acyl-carrier-protein] dehydratase from Caulobacter sp. (strain K31).